An 880-amino-acid chain; its full sequence is DNA double-strand break repair Rad50 ATPase (880 aa).

ATP-binding positions include Arg12, 32-38 (NGSGKSS), and Gln138. Coiled-coil stretches lie at residues 225 to 336 (GELE…VIKE) and 391 to 744 (GEVI…QALN). The region spanning 397–494 (LESLEKERTE…NLRKLEIKLR (98 aa)) is the Zinc-hook domain. 2 residues coordinate Zn(2+): Cys442 and Cys445. 789-794 (FLSGGE) contributes to the ATP binding site.

The protein belongs to the SMC family. RAD50 subfamily. Homodimer. Forms a heterotetramer composed of two Mre11 subunits and two Rad50 subunits. The cofactor is Zn(2+).

Functionally, part of the Rad50/Mre11 complex, which is involved in the early steps of DNA double-strand break (DSB) repair. The complex may facilitate opening of the processed DNA ends to aid in the recruitment of HerA and NurA. Rad50 controls the balance between DNA end bridging and DNA resection via ATP-dependent structural rearrangements of the Rad50/Mre11 complex. In Pyrococcus abyssi (strain GE5 / Orsay), this protein is DNA double-strand break repair Rad50 ATPase.